The chain runs to 187 residues: UPF0301 protein SG2023 (187 aa).

This sequence belongs to the UPF0301 (AlgH) family.

The sequence is that of UPF0301 protein SG2023 from Sodalis glossinidius (strain morsitans).